The primary structure comprises 72 residues: Bradykinin-potentiating peptide BmKbpp (72 aa).

The first 22 residues, 1–22, serve as a signal peptide directing secretion; it reads MNKKTLLVIFFVTMLIVDEVNS. Positions 70–72 are excised as a propeptide; sequence RRR.

This sequence belongs to the non-disulfide-bridged peptide (NDBP) superfamily. Long chain multifunctional peptide (group 2) family. As to expression, expressed by the venom gland.

It is found in the secreted. Its function is as follows. Amphipathic peptide that shows bradykinin potentiating activity and antimicrobial activities against bacteria and fungi. Has higher antibacterial activities against Gram-negative than against Gram-positive bacteria. Also inhibits NADPH oxidase-dependent superoxide production (IC(50) is 0.4 uM on granulocytes stimulated with PMA, IC(50) is 0.51 uM on HL-60 cells undifferentiated and IC(50) is 0.53 uM on HL-60 cells treated with DMSO). The C-terminal peptide shows a higher bradykinin potentiating activity than the complete peptide. The protein is Bradykinin-potentiating peptide BmKbpp of Olivierus martensii (Manchurian scorpion).